A 243-amino-acid chain; its full sequence is Protein DMP8 (243 aa).

The interval 1–37 is disordered; sequence MEKTEESVGIRVYTTTTTQNPSPTSSRSPKPVPLSSL. The span at 14 to 29 shows a compositional bias: low complexity; it reads TTTTTQNPSPTSSRSP. A run of 4 helical transmembrane segments spans residues 70 to 90, 98 to 118, 174 to 194, and 212 to 232; these read MLVNFLPTGTLLMFEMVLPTI, GINTLMIHLLLLLCAMSCFFF, VNDFVHSVMSVLVFMAIAFSD, and VMESFPLMVGIVCSALFLVFP.

Belongs to the plant DMP1 protein family. Restricted to flowers.

It is found in the endoplasmic reticulum membrane. The protein resides in the vacuole membrane. Functionally, involved in membrane remodeling. In Arabidopsis thaliana (Mouse-ear cress), this protein is Protein DMP8.